A 404-amino-acid polypeptide reads, in one-letter code: Propionate kinase (404 aa).

This sequence belongs to the acetokinase family. PduW subfamily.

It localises to the cytoplasm. It carries out the reaction propanoate + ATP = propanoyl phosphate + ADP. It functions in the pathway polyol metabolism; 1,2-propanediol degradation. Works with phosphate acetyltransferase (pta) to capture exogenous propionate and regenerate propionyl-CoA during degradation of 1,2-propanediol (1,2-PD). This chain is Propionate kinase, found in Citrobacter koseri (strain ATCC BAA-895 / CDC 4225-83 / SGSC4696).